The following is a 396-amino-acid chain: L-cysteine desulfidase (396 aa).

The active-site Proton acceptor is cysteine 23. Residues cysteine 288, cysteine 330, and cysteine 337 each coordinate [4Fe-4S] cluster.

The protein belongs to the L-cysteine desulfidase family. Homotrimer. The cofactor is [4Fe-4S] cluster.

The catalysed reaction is L-cysteine + H2O = hydrogen sulfide + pyruvate + NH4(+) + H(+). Catalyzes the cleavage of L-cysteine to form 2-aminoprop-2-enoate and sulfide. The former then spontaneously hydrolyzes to pyruvate and NH(3). May be responsible for the production of sulfide required for the biosynthesis of iron-sulfur centers in this archaea. The sequence is that of L-cysteine desulfidase from Methanococcus maripaludis (strain C6 / ATCC BAA-1332).